Reading from the N-terminus, the 286-residue chain is MKMNPDDIRELRDRTGLGLSDCKKALEECDGDIKKAVDKLRTIGLAKADKKSDRVASDGLVAMCLTENCGVLIELNCETDFVARNEKFIELVLNLASIAHQERCTSVDELKNAKYESIGTVQEAIMNGTSVLGEKLELSKLCYLEAKDGVIAGYVHGDVCGLGKIGALIALQSSGDKAKLQEIGKQIAMHVVAMKPEALSIDDLDQMKLNNERSIIEEQVRSLNKPEEVAKKIVDGRMAKYYEEVVLLEQKFIKDDKMKISDFIKSSELSAVKLSNYELLVLGDAD.

Positions 79–82 (TDFV) are involved in Mg(2+) ion dislocation from EF-Tu.

It belongs to the EF-Ts family.

It localises to the cytoplasm. Functionally, associates with the EF-Tu.GDP complex and induces the exchange of GDP to GTP. It remains bound to the aminoacyl-tRNA.EF-Tu.GTP complex up to the GTP hydrolysis stage on the ribosome. This chain is Elongation factor Ts, found in Wolbachia pipientis wMel.